The following is a 338-amino-acid chain: DNA fragmentation factor subunit beta (338 aa).

Positions 4-80 (KPKSVKLRAL…LLTLGQAWQG (77 aa)) constitute a CIDE-N domain.

Heterodimer of DFFA and DFFB. Interacts with H1-1.

It is found in the cytoplasm. Its subcellular location is the nucleus. Inhibited by DFFA (DFF45). In terms of biological role, nuclease that induces DNA fragmentation and chromatin condensation during apoptosis. Degrades naked DNA and induces apoptotic morphology. This chain is DNA fragmentation factor subunit beta (DFFB), found in Homo sapiens (Human).